The following is a 606-amino-acid chain: Lysosomal cobalamin transporter ABCD4 (606 aa).

The 294-residue stretch at 39–332 folds into the ABC transmembrane type-1 domain; sequence NALMFLTLLC…CFTQLIDLST (294 aa). 5 helical membrane passes run 43–63, 76–96, 190–210, 279–299, and 314–334; these read FLTL…VGLI, LEGF…NSTL, IFGY…PIVM, YLGS…GVYG, and AFVC…STTL. An ABC transporter domain is found at 389-603; it reads LERVSISAPS…GGGRWELMRI (215 aa). 421-428 serves as a coordination point for ATP; the sequence is GNTGTGKT.

The protein belongs to the ABC transporter superfamily. ABCD family. Peroxisomal fatty acyl CoA transporter (TC 3.A.1.203) subfamily. As to quaternary structure, homodimer or heterodimer. Interacts with LMBRD1; this interaction induces the translocation of ABCD4 from the ER to the lysosome membrane. Interacts with LMBRD1 and MMACHC; this interaction ensures the transport of cobalamin from the lysosome to the cytosol. As to expression, ubiquitous.

Its subcellular location is the endoplasmic reticulum membrane. It localises to the lysosome membrane. The enzyme catalyses an R-cob(III)alamin(out) + ATP + H2O = an R-cob(III)alamin(in) + ADP + phosphate + H(+). Functionally, lysosomal membrane protein that transports cobalamin (Vitamin B12) from the lysosomal lumen to the cytosol in an ATP-dependent manner. Targeted by LMBRD1 lysosomal chaperone from the endoplasmic reticulum to the lysosomal membrane. Then forms a complex with lysosomal chaperone LMBRD1 and cytosolic MMACHC to transport cobalamin across the lysosomal membrane. The polypeptide is Lysosomal cobalamin transporter ABCD4 (Homo sapiens (Human)).